Here is a 430-residue protein sequence, read N- to C-terminus: Enolase (430 aa).

Position 167 (Q167) interacts with (2R)-2-phosphoglycerate. Residue E209 is the Proton donor of the active site. Residues D246, E287, and D314 each coordinate Mg(2+). 4 residues coordinate (2R)-2-phosphoglycerate: K339, R368, S369, and K390. K339 (proton acceptor) is an active-site residue.

Belongs to the enolase family. Mg(2+) serves as cofactor.

The protein localises to the cytoplasm. The protein resides in the secreted. It is found in the cell surface. It carries out the reaction (2R)-2-phosphoglycerate = phosphoenolpyruvate + H2O. Its pathway is carbohydrate degradation; glycolysis; pyruvate from D-glyceraldehyde 3-phosphate: step 4/5. Its function is as follows. Catalyzes the reversible conversion of 2-phosphoglycerate (2-PG) into phosphoenolpyruvate (PEP). It is essential for the degradation of carbohydrates via glycolysis. In Prochlorococcus marinus (strain MIT 9515), this protein is Enolase.